The chain runs to 141 residues: Putative pre-16S rRNA nuclease (141 aa).

This sequence belongs to the YqgF nuclease family.

Its subcellular location is the cytoplasm. Its function is as follows. Could be a nuclease involved in processing of the 5'-end of pre-16S rRNA. This is Putative pre-16S rRNA nuclease from Chlorobium luteolum (strain DSM 273 / BCRC 81028 / 2530) (Pelodictyon luteolum).